Here is a 431-residue protein sequence, read N- to C-terminus: Putative malic acid transport protein (431 aa).

10 consecutive transmembrane segments (helical) span residues 30–50 (FTWA…VTSL), 62–82 (GKII…CITF), 101–121 (VLFM…LYPY), 136–156 (ILYW…FYSL), 167–187 (IIPA…IASA), 201–221 (VVAG…VYAV), 239–259 (GMFI…DLAF), 284–304 (FMAL…FVSV), 318–338 (VSWF…QELG), and 346–366 (VCIV…ILIL). Residues 402-424 (EEEKDEAERSKRKAEESDGKTTR) are compositionally biased toward basic and acidic residues. The disordered stretch occupies residues 402-431 (EEEKDEAERSKRKAEESDGKTTRELTSGGL).

This sequence belongs to the tellurite-resistance/dicarboxylate transporter (TDT) family.

Its subcellular location is the membrane. The chain is Putative malic acid transport protein from Schizosaccharomyces pombe (strain 972 / ATCC 24843) (Fission yeast).